Here is a 146-residue protein sequence, read N- to C-terminus: Putative nickel-responsive regulator 1 (146 aa).

4 residues coordinate Ni(2+): H81, H92, Y94, and C100.

This sequence belongs to the transcriptional regulatory CopG/NikR family. Requires Ni(2+) as cofactor.

Transcriptional regulator. The polypeptide is Putative nickel-responsive regulator 1 (Methanosarcina mazei (strain ATCC BAA-159 / DSM 3647 / Goe1 / Go1 / JCM 11833 / OCM 88) (Methanosarcina frisia)).